A 304-amino-acid chain; its full sequence is Ubiquitin thioesterase OTU1 (304 aa).

Residues 5 to 83 (RCKTREGTQL…IVEEDKSKLR (79 aa)) are UBX-like. In terms of domain architecture, OTU spans 105 to 230 (IVRRVVPADN…GIHYDPLQRQ (126 aa)). The cys-loop stretch occupies residues 110–116 (VPADNSC). The active site involves D113. C116 serves as the catalytic Nucleophile. A variable-loop region spans residues 169-179 (IRREDTWGGAI). The his-loop stretch occupies residues 219-223 (YDGIH). I222 is a binding site for substrate. The active site involves H223. The segment at 247–252 (DEALVQ) is S2 site. A C2H2-type zinc finger spans residues 274–298 (LRCMACQKGLTGQSAARDHAKETGH). The active site involves H298.

Its subcellular location is the cytoplasm. The catalysed reaction is Thiol-dependent hydrolysis of ester, thioester, amide, peptide and isopeptide bonds formed by the C-terminal Gly of ubiquitin (a 76-residue protein attached to proteins as an intracellular targeting signal).. Functionally, hydrolase that can remove conjugated ubiquitin from proteins and participates in endoplasmic reticulum-associated degradation (ERAD) for misfolded lumenal proteins. May act by triming the ubiquitin chain on the associated substrate to facilitate their threading through the VCP/p97 pore. Ubiquitin moieties on substrates may present a steric impediment to the threading process when the substrate is transferred to the VCP pore and threaded through VCP's axial channel. Mediates deubiquitination of 'Lys-27'-, 'Lys-29'- and 'Lys-33'-linked polyubiquitin chains. Also able to hydrolyze 'Lys-11'-linked ubiquitin chains. Cleaves both polyubiquitin and di-ubiquitin. The protein is Ubiquitin thioesterase OTU1 (yod1) of Xenopus laevis (African clawed frog).